Here is a 235-residue protein sequence, read N- to C-terminus: Ion-translocating oxidoreductase complex subunit E (235 aa).

Transmembrane regions (helical) follow at residues 63 to 83 (LGLG…ISLF), 93 to 113 (IPIY…LMNA), 117 to 137 (TLYQ…IIIG), 152 to 172 (IWDG…LGAL), and 206 to 226 (SFLL…LLAI).

It belongs to the NqrDE/RnfAE family. In terms of assembly, the complex is composed of six subunits: RnfA, RnfB, RnfC, RnfD, RnfE and RnfG.

The protein resides in the cell inner membrane. In terms of biological role, part of a membrane-bound complex that couples electron transfer with translocation of ions across the membrane. In Haemophilus influenzae (strain 86-028NP), this protein is Ion-translocating oxidoreductase complex subunit E.